A 1620-amino-acid polypeptide reads, in one-letter code: Myb-like protein X (1620 aa).

Positions Met-1–Asn-13 are enriched in polar residues. Disordered stretches follow at residues Met-1–Thr-57, Thr-176–Gly-204, Phe-294–Glu-318, and Lys-450–Ala-849. Positions Pro-28–Thr-57 are enriched in low complexity. A compositionally biased stretch (gly residues) spans Gly-177 to Gly-187. One can recognise an SWIRM domain in the interval Gly-310 to Asn-421. Over residues Lys-450–Lys-497 the composition is skewed to basic and acidic residues. Positions Glu-498 to Glu-511 are enriched in acidic residues. Residues Lys-512–Thr-568 are compositionally biased toward basic and acidic residues. Low complexity predominate over residues Asp-570–Ser-598. Positions Lys-606–Lys-628 are enriched in basic and acidic residues. A compositionally biased stretch (low complexity) spans Glu-629–Ser-645. The segment covering Glu-647–Asn-798 has biased composition (basic and acidic residues). Positions Glu-799–Asp-834 are enriched in acidic residues. Residues Pro-925–Glu-977 form the SANT domain. The disordered stretch occupies residues Gln-1049 to Thr-1506. 3 stretches are compositionally biased toward basic and acidic residues: residues Ser-1051 to Asp-1195, Glu-1219 to Asn-1255, and His-1264 to Leu-1302. Over residues Asn-1303 to Asn-1325 the composition is skewed to low complexity. Residues Thr-1338 to Asp-1350 are compositionally biased toward polar residues. Composition is skewed to low complexity over residues Thr-1358 to Thr-1382 and Asn-1390 to Asn-1416. Composition is skewed to acidic residues over residues Glu-1467 to Leu-1481 and Val-1493 to Met-1504.

The protein resides in the nucleus. This is Myb-like protein X (mybX) from Dictyostelium discoideum (Social amoeba).